The following is an 89-amino-acid chain: Small ribosomal subunit protein uS15 (89 aa).

It belongs to the universal ribosomal protein uS15 family. As to quaternary structure, part of the 30S ribosomal subunit. Forms a bridge to the 50S subunit in the 70S ribosome, contacting the 23S rRNA.

Functionally, one of the primary rRNA binding proteins, it binds directly to 16S rRNA where it helps nucleate assembly of the platform of the 30S subunit by binding and bridging several RNA helices of the 16S rRNA. Its function is as follows. Forms an intersubunit bridge (bridge B4) with the 23S rRNA of the 50S subunit in the ribosome. The protein is Small ribosomal subunit protein uS15 of Rhizobium rhizogenes (strain K84 / ATCC BAA-868) (Agrobacterium radiobacter).